A 323-amino-acid polypeptide reads, in one-letter code: tRNA U34 carboxymethyltransferase (323 aa).

Carboxy-S-adenosyl-L-methionine-binding positions include lysine 91, tryptophan 105, lysine 110, glycine 130, 152–154 (DPT), 181–182 (IE), methionine 196, tyrosine 200, and arginine 315.

This sequence belongs to the class I-like SAM-binding methyltransferase superfamily. CmoB family. Homotetramer.

The enzyme catalyses carboxy-S-adenosyl-L-methionine + 5-hydroxyuridine(34) in tRNA = 5-carboxymethoxyuridine(34) in tRNA + S-adenosyl-L-homocysteine + H(+). Its function is as follows. Catalyzes carboxymethyl transfer from carboxy-S-adenosyl-L-methionine (Cx-SAM) to 5-hydroxyuridine (ho5U) to form 5-carboxymethoxyuridine (cmo5U) at position 34 in tRNAs. This Salmonella typhi protein is tRNA U34 carboxymethyltransferase.